A 498-amino-acid polypeptide reads, in one-letter code: ATP synthase subunit beta, chloroplastic (498 aa).

172 to 179 (GGAGVGKT) serves as a coordination point for ATP.

Belongs to the ATPase alpha/beta chains family. F-type ATPases have 2 components, CF(1) - the catalytic core - and CF(0) - the membrane proton channel. CF(1) has five subunits: alpha(3), beta(3), gamma(1), delta(1), epsilon(1). CF(0) has four main subunits: a(1), b(1), b'(1) and c(9-12).

The protein resides in the plastid. It is found in the chloroplast thylakoid membrane. The catalysed reaction is ATP + H2O + 4 H(+)(in) = ADP + phosphate + 5 H(+)(out). In terms of biological role, produces ATP from ADP in the presence of a proton gradient across the membrane. The catalytic sites are hosted primarily by the beta subunits. The chain is ATP synthase subunit beta, chloroplastic from Nypa fruticans (Nypa palm).